The following is a 462-amino-acid chain: Major capsid protein (462 aa).

This sequence belongs to the NCLDV major capsid protein family. As to quaternary structure, homotrimer.

Its subcellular location is the virion. Its function is as follows. Major capsid protein that self assembles to form an icosahedral capsid. Represents around 50% of the total virion protein mass. The sequence is that of Major capsid protein (MCP) from Costelytra zealandica (CzIV).